We begin with the raw amino-acid sequence, 155 residues long: Small ribosomal subunit protein uS7c (155 aa).

Belongs to the universal ribosomal protein uS7 family. Part of the 30S ribosomal subunit.

The protein resides in the plastid. Functionally, one of the primary rRNA binding proteins, it binds directly to 16S rRNA where it nucleates assembly of the head domain of the 30S subunit. The protein is Small ribosomal subunit protein uS7c (rps7) of Aneura mirabilis (Parasitic liverwort).